A 338-amino-acid chain; its full sequence is Lipoate-protein ligase A (338 aa).

In terms of domain architecture, BPL/LPL catalytic spans 29 to 216 (PATQRVLFLW…AFFAHYGERV (188 aa)). Residues Arg-71, 76 to 79 (GAVF), and Lys-134 contribute to the ATP site. Position 134 (Lys-134) interacts with (R)-lipoate.

It belongs to the LplA family. As to quaternary structure, monomer.

The protein resides in the cytoplasm. It catalyses the reaction L-lysyl-[lipoyl-carrier protein] + (R)-lipoate + ATP = N(6)-[(R)-lipoyl]-L-lysyl-[lipoyl-carrier protein] + AMP + diphosphate + H(+). Its pathway is protein modification; protein lipoylation via exogenous pathway; protein N(6)-(lipoyl)lysine from lipoate: step 1/2. It functions in the pathway protein modification; protein lipoylation via exogenous pathway; protein N(6)-(lipoyl)lysine from lipoate: step 2/2. In terms of biological role, catalyzes both the ATP-dependent activation of exogenously supplied lipoate to lipoyl-AMP and the transfer of the activated lipoyl onto the lipoyl domains of lipoate-dependent enzymes. The polypeptide is Lipoate-protein ligase A (Escherichia coli O157:H7).